A 115-amino-acid chain; its full sequence is Large ribosomal subunit protein bL20 (115 aa).

The protein belongs to the bacterial ribosomal protein bL20 family.

Its function is as follows. Binds directly to 23S ribosomal RNA and is necessary for the in vitro assembly process of the 50S ribosomal subunit. It is not involved in the protein synthesizing functions of that subunit. This is Large ribosomal subunit protein bL20 from Chlorobaculum tepidum (strain ATCC 49652 / DSM 12025 / NBRC 103806 / TLS) (Chlorobium tepidum).